Consider the following 653-residue polypeptide: Phospholipid-transporting ATPase VD (653 aa).

Residues 1–375 (MACNLCYEAE…GHWCYTRLSN (375 aa)) lie on the Cytoplasmic side of the membrane. Residues glutamate 14, phenylalanine 56, lysine 80, arginine 124, threonine 204, glycine 205, aspartate 206, 259-266 (GLIITGKT), arginine 293, and lysine 299 contribute to the ATP site. Aspartate 319 lines the Mg(2+) pocket. ATP-binding residues include asparagine 322 and aspartate 323. Residue aspartate 323 participates in Mg(2+) binding. A helical transmembrane segment spans residues 376–396 (MILYFFYKNVAYVNLLFWYQF). Residues 397–407 (FCGFSGTSMTD) lie on the Exoplasmic loop side of the membrane. The chain crosses the membrane as a helical span at residues 408–428 (YWVLIFFNLLFTSAPPVIYGV). The Cytoplasmic segment spans residues 429–458 (LEKDVSAETLMQLPELYKSGQKSEAYLPHT). Residues 459 to 480 (FWITLLDAFYQSLVCFFVPYFT) form a helical membrane-spanning segment. The Exoplasmic loop portion of the chain corresponds to 481 to 487 (YQGSDID). The chain crosses the membrane as a helical span at residues 488 to 510 (IFAFGNPLNTAALFIILLHLIIE). Residues 511–516 (SKSLTW) lie on the Cytoplasmic side of the membrane. Residues 517-537 (IHMLVITGSILSYFLFAIVFG) form a helical membrane-spanning segment. The Exoplasmic loop segment spans residues 538–555 (AMCVTCNPPSNPYWIMQE). A helical membrane pass occupies residues 556 to 580 (HVLDPVFYLVCILTTCIALLPRFVY). Topologically, residues 581–653 (RGAGKMNQVT…AFEMARPCKD (73 aa)) are cytoplasmic.

The protein belongs to the cation transport ATPase (P-type) (TC 3.A.3) family. Type IV subfamily. As to quaternary structure, component of a P4-ATPase flippase complex which consists of a catalytic alpha subunit ATP10A and an accessory beta subunit TMEM30A. Requires Mg(2+) as cofactor. Autophosphorylated at the conserved aspartate of the P-type ATPase signature sequence.

It localises to the cell membrane. It is found in the endoplasmic reticulum membrane. The enzyme catalyses ATP + H2O + phospholipidSide 1 = ADP + phosphate + phospholipidSide 2.. It carries out the reaction a beta-D-glucosyl-(1&lt;-&gt;1')-N-acylsphing-4-enine(out) + ATP + H2O = a beta-D-glucosyl-(1&lt;-&gt;1')-N-acylsphing-4-enine(in) + ADP + phosphate + H(+). Its function is as follows. Catalytic component of a P4-ATPase flippase complex, which catalyzes the hydrolysis of ATP coupled to the transport of glucosylceramide (GlcCer) from the outer to the inner leaflet of the plasma membrane. The sequence is that of Phospholipid-transporting ATPase VD (ATP10D) from Macaca fascicularis (Crab-eating macaque).